Consider the following 1432-residue polypeptide: Gag-Pol polyprotein (1432 aa).

2 consecutive CCHC-type zinc fingers follow at residues 368–385 (QRCY…DCKN) and 386–403 (QKCF…NCKS). One can recognise a Peptidase A2 domain in the interval 452-525 (VRALIDTGAD…TPVNLLGRSV (74 aa)). The active-site For protease activity; shared with dimeric partner is Asp457. The Reverse transcriptase domain occupies 579 to 766 (DGKISRTPWD…EQVQWLGYEL (188 aa)). Positions 645, 720, and 721 each coordinate Mg(2+). The stretch at 815-843 (KGKTDLKDKIKLTEEAIQCLETVNKRLKD) forms a coiled coil. Positions 959-1079 (IERYPTYYTD…VDQEVQKALQ (121 aa)) constitute an RNase H type-1 domain. Positions 968, 999, 1019, and 1071 each coordinate Mg(2+). An Integrase-type zinc finger spans residues 1157–1198 (EAIPQAIEEHEKWHTTAEILAREFQLPRRVAREIVHRCQACK). 4 residues coordinate Zn(2+): His1166, His1170, Cys1194, and Cys1197. The Integrase catalytic domain occupies 1206–1358 (RGTNPRERFL…TPYEIYLESE (153 aa)). Asp1219 and Asp1271 together coordinate Mg(2+). The segment at residues 1376–1422 (KWAYVRDKRKVWKGPYKVLWDGEGAAVVEENAMPTLYPHRHMRFIPP) is a DNA-binding region (integrase-type).

Post-translationally, specific enzymatic cleavages by the viral protease yield mature proteins. The protease is released by autocatalytic cleavage. The polyprotein is cleaved during and after budding, this process is termed maturation.

It is found in the virion. It catalyses the reaction DNA(n) + a 2'-deoxyribonucleoside 5'-triphosphate = DNA(n+1) + diphosphate. It carries out the reaction Endohydrolysis of RNA in RNA/DNA hybrids. Three different cleavage modes: 1. sequence-specific internal cleavage of RNA. Human immunodeficiency virus type 1 and Moloney murine leukemia virus enzymes prefer to cleave the RNA strand one nucleotide away from the RNA-DNA junction. 2. RNA 5'-end directed cleavage 13-19 nucleotides from the RNA end. 3. DNA 3'-end directed cleavage 15-20 nucleotides away from the primer terminus.. The catalysed reaction is 3'-end directed exonucleolytic cleavage of viral RNA-DNA hybrid.. Its function is as follows. Matrix protein p16 forms the outer shell of the core of the virus, lining the inner surface of the viral membrane. In terms of biological role, capsid protein p26 forms the conical core of the virus that encapsulates the genomic RNA-nucleocapsid complex. The aspartyl protease mediates proteolytic cleavages of Gag and Gag-Pol polyproteins during or shortly after the release of the virion from the plasma membrane. Cleavages take place as an ordered, step-wise cascade to yield mature proteins. This process is called maturation. Displays maximal activity during the budding process just prior to particle release from the cell. Functionally, reverse transcriptase/ribonuclease H (RT) is a multifunctional enzyme that converts the viral RNA genome into dsDNA in the cytoplasm, shortly after virus entry into the cell. This enzyme displays a DNA polymerase activity that can copy either DNA or RNA templates, and a ribonuclease H (RNase H) activity that cleaves the RNA strand of RNA-DNA heteroduplexes in a partially processive 3' to 5' endonucleasic mode. Conversion of viral genomic RNA into dsDNA requires many steps. A tRNA binds to the primer-binding site (PBS) situated at the 5'-end of the viral RNA. RT uses the 3' end of the tRNA primer to perform a short round of RNA-dependent minus-strand DNA synthesis. The reading proceeds through the U5 region and ends after the repeated (R) region which is present at both ends of viral RNA. The portion of the RNA-DNA heteroduplex is digested by the RNase H, resulting in a ssDNA product attached to the tRNA primer. This ssDNA/tRNA hybridizes with the identical R region situated at the 3' end of viral RNA. This template exchange, known as minus-strand DNA strong stop transfer, can be either intra- or intermolecular. RT uses the 3' end of this newly synthesized short ssDNA to perform the RNA-dependent minus-strand DNA synthesis of the whole template. RNase H digests the RNA template except for a polypurine tract (PPT) situated at the 5'-end of the genome. It is not clear if both polymerase and RNase H activities are simultaneous. RNase H probably can proceed both in a polymerase-dependent (RNA cut into small fragments by the same RT performing DNA synthesis) and a polymerase-independent mode (cleavage of remaining RNA fragments by free RTs). Secondly, RT performs DNA-directed plus-strand DNA synthesis using the PPT that has not been removed by RNase H as primer. PPT and tRNA primers are then removed by RNase H. The 3' and 5' ssDNA PBS regions hybridize to form a circular dsDNA intermediate. Strand displacement synthesis by RT to the PBS and PPT ends produces a blunt ended, linear dsDNA copy of the viral genome that includes long terminal repeats (LTRs) at both ends. Its function is as follows. Integrase catalyzes viral DNA integration into the host chromosome, by performing a series of DNA cutting and joining reactions. This enzyme activity takes place after virion entry into a cell and reverse transcription of the RNA genome in dsDNA. The sequence is that of Gag-Pol polyprotein (gag-pol) from Jembrana disease virus (JDV).